The sequence spans 449 residues: Probable pectate lyase P59 (449 aa).

The N-terminal stretch at 1–22 (MGGPKIKYSFLFLCITFATIIP) is a signal peptide. N-linked (GlcNAc...) asparagine glycosylation is found at asparagine 56, asparagine 80, and asparagine 81. Ca(2+) is bound by residues aspartate 245, aspartate 269, and aspartate 273. Arginine 325 is an active-site residue.

It belongs to the polysaccharide lyase 1 family. It depends on Ca(2+) as a cofactor. In terms of tissue distribution, expressed in anthers and pollen.

It catalyses the reaction Eliminative cleavage of (1-&gt;4)-alpha-D-galacturonan to give oligosaccharides with 4-deoxy-alpha-D-galact-4-enuronosyl groups at their non-reducing ends.. It functions in the pathway glycan metabolism; pectin degradation; 2-dehydro-3-deoxy-D-gluconate from pectin: step 2/5. Might be needed during pollen development and tube growth. The polypeptide is Probable pectate lyase P59 (LAT59) (Solanum lycopersicum (Tomato)).